The following is a 216-amino-acid chain: Large ribosomal subunit protein uL3 (216 aa).

An N5-methylglutamine modification is found at Gln-157.

Belongs to the universal ribosomal protein uL3 family. In terms of assembly, part of the 50S ribosomal subunit. Forms a cluster with proteins L14 and L19. Methylated by PrmB.

Functionally, one of the primary rRNA binding proteins, it binds directly near the 3'-end of the 23S rRNA, where it nucleates assembly of the 50S subunit. In Xanthomonas axonopodis pv. citri (strain 306), this protein is Large ribosomal subunit protein uL3.